The primary structure comprises 290 residues: CMRF35-like molecule 1 (290 aa).

A signal peptide spans 1 to 19; the sequence is MPLLTLYLLLFWLSGYSIV. Positions 20–126 constitute an Ig-like V-type domain; that stretch reads TQITGPTTVN…LGVTVQVTID (107 aa). Topologically, residues 20 to 156 are extracellular; that stretch reads TQITGPTTVN…DNRHKLLKLS (137 aa). Cystine bridges form between Cys40–Cys108 and Cys54–Cys62. An N-linked (GlcNAc...) asparagine glycan is attached at Asn88. Residues 157-177 form a helical membrane-spanning segment; sequence VLLPLIFTILLLLLVAASLLA. The Cytoplasmic portion of the chain corresponds to 178–290; that stretch reads WRMMKYQQKA…PTEYSTISRP (113 aa). The tract at residues 267 to 290 is disordered; the sequence is GHLSSHLPGRGPEEPTEYSTISRP.

It belongs to the CD300 family. In terms of assembly, interacts with PTPN6/SHP-1 in a tyrosine phosphorylation dependent manner. Interacts with IL4R. Post-translationally, phosphorylated on tyrosine. Highly expressed in spleen, peripheral blood leukocyte and monocyte, and lung. Weakly expressed in thymus, heart, brain, placenta, liver, skeletal muscle, kidney, pancreas, prostate, testis, ovary, small intestine or colon. Expressed selectively in monocytes and monocyte-related cells.

The protein localises to the cell membrane. Acts as an inhibitory receptor for myeloid cells and mast cells. Positively regulates the phagocytosis of apoptotic cells (efferocytosis) via phosphatidylserine (PS) recognition; recognizes and binds PS as a ligand which is expressed on the surface of apoptotic cells. Plays an important role in the maintenance of immune homeostasis, by promoting macrophage-mediated efferocytosis and by inhibiting dendritic cell-mediated efferocytosis. Negatively regulates Fc epsilon receptor-dependent mast cell activation and allergic responses via binding to ceramide and sphingomyelin which act as ligands. May act as a coreceptor for interleukin 4 (IL-4). Associates with and regulates IL-4 receptor alpha-mediated responses by augmenting IL-4- and IL-13-induced signaling. Negatively regulates the Toll-like receptor (TLR) signaling mediated by MYD88 and TRIF through activation of PTPN6/SHP-1 and PTPN11/SHP-2. Inhibits osteoclast formation. Induces macrophage cell death upon engagement. The protein is CMRF35-like molecule 1 (CD300LF) of Homo sapiens (Human).